Consider the following 117-residue polypeptide: Big defensin (117 aa).

Positions 1 to 23 (MKGNIGIAVFYMLLLLLPTDSIG) are cleaved as a signal peptide. The propeptide occupies 26–36 (MEEEQEKLFRQ). Cystine bridges form between cysteine 83–cysteine 113, cysteine 90–cysteine 108, and cysteine 94–cysteine 114.

It belongs to the big defensin family. In terms of assembly, interacts with intracellular coagulation inhibitor 1/LICI-1. Expressed in all tissues examined, including hemocytes, heart, hepatopancreas, stomach, intestine and skeletal muscle.

It is found in the secreted. In terms of biological role, significantly inhibits the growth of Gram-negative and Gram-positive bacteria and fungi in vitro. The polypeptide is Big defensin (Tachypleus tridentatus (Japanese horseshoe crab)).